A 473-amino-acid chain; its full sequence is DNA-binding protein (473 aa).

Disordered regions lie at residues 1–69 (MAGR…GFSH) and 85–111 (RRLE…SKAV). Positions 7 to 18 (ELPTITPYLQET) are enriched in polar residues. The span at 53 to 62 (PDSEEEEEEV) shows a compositional bias: acidic residues. Tyrosine 141 carries the post-translational modification Phosphotyrosine; by host. Zn(2+)-binding residues include cysteine 230 and histidine 232. The flexible loop stretch occupies residues 243–277 (VEMDVASENAQRALKEHPSRAKVVQNRWGRSVVQL). Residues cysteine 285, cysteine 301, cysteine 342, cysteine 344, cysteine 396, and cysteine 412 each contribute to the Zn(2+) site. Residues 459–473 (VALPASHGDGEKEPF) form a C-terminal arm, DBP binding region.

Belongs to the adenoviridae E2A DNA-binding protein family. Homomultimerizes on viral ssDNA bound to pTP. Forms a initiation complex with viral polymerase, pTP and hosts NFIA and POU2F1/OCT1. Interacts with host SRCAP.

It is found in the host nucleus. Its function is as follows. Plays a role in the elongation phase of viral strand displacement replication by unwinding the template in an ATP-independent fashion, employing its capacity to form multimers. Also enhances the rate of initiation. Released from template upon second strand synthesis. Assembles in complex with viral pTP, viral pol, host NFIA and host POU2F1/OCT1 on viral origin of replication. Covers the whole ssDNA genome during synthesis. The complementary strand synthesis induces its relese from DNA template. May inhibit cellular transcription mediated by the interaction between host SRCAP and CBP. The polypeptide is DNA-binding protein (Homo sapiens (Human)).